The following is a 337-amino-acid chain: Phosphate acyltransferase (337 aa).

Belongs to the PlsX family. As to quaternary structure, homodimer. Probably interacts with PlsY.

It is found in the cytoplasm. The enzyme catalyses a fatty acyl-[ACP] + phosphate = an acyl phosphate + holo-[ACP]. Its pathway is lipid metabolism; phospholipid metabolism. Catalyzes the reversible formation of acyl-phosphate (acyl-PO(4)) from acyl-[acyl-carrier-protein] (acyl-ACP). This enzyme utilizes acyl-ACP as fatty acyl donor, but not acyl-CoA. In Ehrlichia canis (strain Jake), this protein is Phosphate acyltransferase.